The sequence spans 647 residues: Threonine--tRNA ligase (647 aa).

Residues 1–61 (MIKITFPDGA…EEDGSIEIVT (61 aa)) form the TGS domain. Residues 240-538 (DHRKLGKELD…LIETYKGAFP (299 aa)) are catalytic. Cys-334, His-385, and His-515 together coordinate Zn(2+).

Belongs to the class-II aminoacyl-tRNA synthetase family. As to quaternary structure, homodimer. It depends on Zn(2+) as a cofactor.

The protein localises to the cytoplasm. The enzyme catalyses tRNA(Thr) + L-threonine + ATP = L-threonyl-tRNA(Thr) + AMP + diphosphate + H(+). In terms of biological role, catalyzes the attachment of threonine to tRNA(Thr) in a two-step reaction: L-threonine is first activated by ATP to form Thr-AMP and then transferred to the acceptor end of tRNA(Thr). Also edits incorrectly charged L-seryl-tRNA(Thr). This is Threonine--tRNA ligase from Streptococcus pyogenes serotype M49 (strain NZ131).